Reading from the N-terminus, the 340-residue chain is Cathepsin S (340 aa).

Residues 1-17 form the signal peptide; that stretch reads MRAPGHAAIRWLFWMPL. A propeptide spans 18–122 (activation peptide); the sequence is VCSVAMEQLQ…VTFRSYSNRT (105 aa). N120 carries an N-linked (GlcNAc...) asparagine glycan. Cystine bridges form between C134–C233, C144–C189, C178–C222, and C281–C329. C147 is an active-site residue. Catalysis depends on residues H287 and N307.

The protein belongs to the peptidase C1 family. Widely expressed with highest expression found in non-skeletal tissues. Relatively high levels found in skeletal tissues. Expressed in spleen, B cells, dendritic cells and macrophages.

It localises to the lysosome. The protein localises to the secreted. The protein resides in the cytoplasmic vesicle. It is found in the phagosome. The enzyme catalyses Similar to cathepsin L, but with much less activity on Z-Phe-Arg-|-NHMec, and more activity on the Z-Val-Val-Arg-|-Xaa compound.. Thiol protease. Key protease responsible for the removal of the invariant chain from MHC class II molecules and MHC class II antigen presentation. The bond-specificity of this proteinase is in part similar to the specificities of cathepsin L. This Mus musculus (Mouse) protein is Cathepsin S (Ctss).